The primary structure comprises 252 residues: tRNA (guanine-N(1)-)-methyltransferase (252 aa).

S-adenosyl-L-methionine contacts are provided by residues Gly110 and 130–135 (VGDFVL).

It belongs to the RNA methyltransferase TrmD family. In terms of assembly, homodimer.

Its subcellular location is the cytoplasm. It carries out the reaction guanosine(37) in tRNA + S-adenosyl-L-methionine = N(1)-methylguanosine(37) in tRNA + S-adenosyl-L-homocysteine + H(+). Specifically methylates guanosine-37 in various tRNAs. The sequence is that of tRNA (guanine-N(1)-)-methyltransferase from Magnetococcus marinus (strain ATCC BAA-1437 / JCM 17883 / MC-1).